Here is a 308-residue protein sequence, read N- to C-terminus: Ribosomal RNA large subunit methyltransferase F (308 aa).

Belongs to the methyltransferase superfamily. METTL16/RlmF family.

The protein localises to the cytoplasm. It carries out the reaction adenosine(1618) in 23S rRNA + S-adenosyl-L-methionine = N(6)-methyladenosine(1618) in 23S rRNA + S-adenosyl-L-homocysteine + H(+). Its function is as follows. Specifically methylates the adenine in position 1618 of 23S rRNA. The sequence is that of Ribosomal RNA large subunit methyltransferase F from Salmonella heidelberg (strain SL476).